The following is a 513-amino-acid chain: Probable histone deacetylase 19 (513 aa).

The histone deacetylase stretch occupies residues 23-334 (RRVCYFYDPD…WCYETGVALG (312 aa)). The active-site Proton donor/acceptor is His-154. The Zn(2+) site is built by Asp-189, His-191, and Asp-277. Disordered regions lie at residues 384-432 (HAPS…ESSR) and 446-513 (ENAT…YHKP). Over residues 398–409 (EIPEQDEDQDDP) the composition is skewed to acidic residues. Residues 410–432 (DERHDPDSDMEVDDHKAVEESSR) show a composition bias toward basic and acidic residues. Residues 492-504 (NVKNEPESSTKLQ) are compositionally biased toward polar residues.

This sequence belongs to the histone deacetylase family. HD type 1 subfamily. Zn(2+) is required as a cofactor.

The protein localises to the nucleus. It catalyses the reaction N(6)-acetyl-L-lysyl-[histone] + H2O = L-lysyl-[histone] + acetate. In terms of biological role, responsible for the deacetylation of lysine residues on the N-terminal part of the core histones (H2A, H2B, H3 and H4). Histone deacetylation gives a tag for epigenetic repression and plays an important role in transcriptional regulation, cell cycle progression and developmental events. Histone deacetylases act via the formation of large multiprotein complexes. This is Probable histone deacetylase 19 from Zea mays (Maize).